We begin with the raw amino-acid sequence, 297 residues long: MRIAVIGAGKWGSALHLALKENHTCFISSLHQRDLEDFVSIKEALECEYLIFALSSQGMRVWLKENFINKGQKILIASKGIEDQSCQFLDEIFLDFVPKENFCVLSGPSFAAEVMQKLPTALMISGINQELCKKFASFFPDFIKTYIDDDVRGAEICGAYKNVLAIASGISDGLKLGNNARAALISRGLIEMHRFGKFFGAKEETFLGLGGAGDLFLTATSVLSRNYRVGLKLAQNQKLDSILAELNEVAEGVKTAYAIEKLAKMKGIYTPIVNEVVAIFKGKSVQEATQNLLKQND.

NADPH-binding residues include W11, R33, and K79. Sn-glycerol 3-phosphate contacts are provided by K79, G107, and S109. A111 contacts NADPH. 5 residues coordinate sn-glycerol 3-phosphate: K161, D214, S224, R225, and N226. The active-site Proton acceptor is K161. R225 is an NADPH binding site. Positions 249 and 251 each coordinate NADPH.

Belongs to the NAD-dependent glycerol-3-phosphate dehydrogenase family.

The protein localises to the cytoplasm. The catalysed reaction is sn-glycerol 3-phosphate + NAD(+) = dihydroxyacetone phosphate + NADH + H(+). The enzyme catalyses sn-glycerol 3-phosphate + NADP(+) = dihydroxyacetone phosphate + NADPH + H(+). It functions in the pathway membrane lipid metabolism; glycerophospholipid metabolism. In terms of biological role, catalyzes the reduction of the glycolytic intermediate dihydroxyacetone phosphate (DHAP) to sn-glycerol 3-phosphate (G3P), the key precursor for phospholipid synthesis. This chain is Glycerol-3-phosphate dehydrogenase [NAD(P)+], found in Campylobacter jejuni subsp. doylei (strain ATCC BAA-1458 / RM4099 / 269.97).